The primary structure comprises 212 residues: Ion-translocating oxidoreductase complex subunit G (212 aa).

Residues 9-29 traverse the membrane as a helical segment; the sequence is GLLLGLFALLCTGLVAIVNQL. Position 176 is an FMN phosphoryl threonine (Thr-176).

Belongs to the RnfG family. As to quaternary structure, the complex is composed of six subunits: RnfA, RnfB, RnfC, RnfD, RnfE and RnfG. It depends on FMN as a cofactor.

It localises to the cell inner membrane. Functionally, part of a membrane-bound complex that couples electron transfer with translocation of ions across the membrane. The chain is Ion-translocating oxidoreductase complex subunit G from Shewanella piezotolerans (strain WP3 / JCM 13877).